Here is a 405-residue protein sequence, read N- to C-terminus: MRDTYVLSGARLATMEAEGSYGLVEDGAIAIQGDEILWCGARGALPDTYAACPSTDLNGRLVTPAFIDCHTHIVFGGDRAGEFEMRLEGATYEEVAKAGGGIVSTVTATRAASLDALVTGALPRLDALIAEGVSTVEVKSGYGLDRETELNMLRAARRLAEHRDVTVKTTFLGAHAVPAEYAGRADAYLDEVCLPTLRAAHAEGLVDAVDGFCEGIAFSAAQIAKVFDVAAELGLPVKLHAEQLSHQGGTKLAAERGALSVDHVEYATEADARAMAASGSVAVLLPGAFYTIRETQVPPVAEFRMHGVPMALATDCNPGSSPLTSLLLTLNMGCTLFRLTPEEALAGVTRNAARALGMQDRGRIAPGLRADLAVWDVSRPAELAYRIGFNPLYARVMGGKMEVRT.

Fe(3+)-binding residues include H70 and H72. H70 and H72 together coordinate Zn(2+). 4-imidazolone-5-propanoate contacts are provided by R79, Y142, and H175. Residue Y142 participates in N-formimidoyl-L-glutamate binding. H240 lines the Fe(3+) pocket. H240 is a Zn(2+) binding site. Q243 contributes to the 4-imidazolone-5-propanoate binding site. Position 315 (D315) interacts with Fe(3+). D315 is a Zn(2+) binding site. N317 and G319 together coordinate N-formimidoyl-L-glutamate. S320 lines the 4-imidazolone-5-propanoate pocket.

The protein belongs to the metallo-dependent hydrolases superfamily. HutI family. Zn(2+) is required as a cofactor. The cofactor is Fe(3+).

It is found in the cytoplasm. It carries out the reaction 4-imidazolone-5-propanoate + H2O = N-formimidoyl-L-glutamate. It participates in amino-acid degradation; L-histidine degradation into L-glutamate; N-formimidoyl-L-glutamate from L-histidine: step 3/3. Its function is as follows. Catalyzes the hydrolytic cleavage of the carbon-nitrogen bond in imidazolone-5-propanoate to yield N-formimidoyl-L-glutamate. It is the third step in the universal histidine degradation pathway. This Ruegeria sp. (strain TM1040) (Silicibacter sp.) protein is Imidazolonepropionase.